We begin with the raw amino-acid sequence, 726 residues long: Catalase-peroxidase (726 aa).

Residues 91–214 (WHAAGTYRIG…LAAVQMGLIY (124 aa)) constitute a cross-link (tryptophyl-tyrosyl-methioninium (Trp-Tyr) (with M-240)). The active-site Proton acceptor is H92. Residues 214-240 (YVNPEGPNGNPDPVAAAIDIRETFRRM) constitute a cross-link (tryptophyl-tyrosyl-methioninium (Tyr-Met) (with W-91)). Residue H255 coordinates heme b. Positions 335–362 (AHQWKPKGNAGAGTVPDPADPSKRRSPS) are disordered.

This sequence belongs to the peroxidase family. Peroxidase/catalase subfamily. In terms of assembly, homodimer or homotetramer. Heme b serves as cofactor. In terms of processing, formation of the three residue Trp-Tyr-Met cross-link is important for the catalase, but not the peroxidase activity of the enzyme.

It catalyses the reaction H2O2 + AH2 = A + 2 H2O. It carries out the reaction 2 H2O2 = O2 + 2 H2O. Its function is as follows. Bifunctional enzyme with both catalase and broad-spectrum peroxidase activity. This Cupriavidus metallidurans (strain ATCC 43123 / DSM 2839 / NBRC 102507 / CH34) (Ralstonia metallidurans) protein is Catalase-peroxidase.